The sequence spans 804 residues: Protein translocase subunit SecA (804 aa).

Residues Gln100, 118-122 (GEGKT), and Asp508 contribute to the ATP site.

The protein belongs to the SecA family. Monomer and homodimer. Part of the essential Sec protein translocation apparatus which comprises SecA, SecYEG and auxiliary proteins SecDF. Other proteins may also be involved.

It is found in the cell membrane. It localises to the cytoplasm. The enzyme catalyses ATP + H2O + cellular proteinSide 1 = ADP + phosphate + cellular proteinSide 2.. Part of the Sec protein translocase complex. Interacts with the SecYEG preprotein conducting channel. Has a central role in coupling the hydrolysis of ATP to the transfer of proteins into and across the cell membrane, serving as an ATP-driven molecular motor driving the stepwise translocation of polypeptide chains across the membrane. The sequence is that of Protein translocase subunit SecA from Leuconostoc citreum (strain KM20).